The chain runs to 408 residues: Peptidase T (408 aa).

Residue His-78 participates in Zn(2+) binding. Asp-80 is an active-site residue. Asp-140 contacts Zn(2+). The active-site Proton acceptor is Glu-173. Glu-174, Asp-196, and His-379 together coordinate Zn(2+).

This sequence belongs to the peptidase M20B family. Zn(2+) serves as cofactor.

It is found in the cytoplasm. The enzyme catalyses Release of the N-terminal residue from a tripeptide.. Functionally, cleaves the N-terminal amino acid of tripeptides. This chain is Peptidase T, found in Citrobacter koseri (strain ATCC BAA-895 / CDC 4225-83 / SGSC4696).